The following is a 166-amino-acid chain: UPF0254 protein Maeo_0668 (166 aa).

This sequence belongs to the UPF0254 family.

The polypeptide is UPF0254 protein Maeo_0668 (Methanococcus aeolicus (strain ATCC BAA-1280 / DSM 17508 / OCM 812 / Nankai-3)).